Reading from the N-terminus, the 633-residue chain is DNA mismatch repair protein MutL (633 aa).

Disordered stretches follow at residues 337 to 364 (RPDDQLAPPGATSLTEPRPTGAAAGEFG) and 383 to 405 (VGWSGGSSASGGSSGYSAYTRPE). Residues 385-396 (WSGGSSASGGSS) are compositionally biased toward gly residues.

It belongs to the DNA mismatch repair MutL/HexB family.

Functionally, this protein is involved in the repair of mismatches in DNA. It is required for dam-dependent methyl-directed DNA mismatch repair. May act as a 'molecular matchmaker', a protein that promotes the formation of a stable complex between two or more DNA-binding proteins in an ATP-dependent manner without itself being part of a final effector complex. The chain is DNA mismatch repair protein MutL from Pseudomonas aeruginosa (strain UCBPP-PA14).